A 107-amino-acid polypeptide reads, in one-letter code: Phosphoribosyl-ATP pyrophosphatase (107 aa).

Belongs to the PRA-PH family.

It localises to the cytoplasm. It carries out the reaction 1-(5-phospho-beta-D-ribosyl)-ATP + H2O = 1-(5-phospho-beta-D-ribosyl)-5'-AMP + diphosphate + H(+). The protein operates within amino-acid biosynthesis; L-histidine biosynthesis; L-histidine from 5-phospho-alpha-D-ribose 1-diphosphate: step 2/9. This Rhizobium etli (strain CIAT 652) protein is Phosphoribosyl-ATP pyrophosphatase.